Reading from the N-terminus, the 205-residue chain is MILSVLSSLALVSGLMVVRAKNPVHSVLFFILVFCDTSGLLLLLGLDFFAMIFLVVYIGAIAVLFLFVVMMFHIQIAEIHEEVLRYLPVSGIIGLIFWWEMFFILDNESIPLLPTQRNTTSLRYTVYAGKVRSWTNLETLGNLLYTYYFVWFLVSSLILLVAMIGAIVLTMHRTTKVKRQDVFRRNAIDFRRTIMRRTTDPLTIY.

Transmembrane regions (helical) follow at residues 48-68 (FFAM…FLFV), 86-106 (YLPV…FILD), and 150-170 (VWFL…IVLT).

It belongs to the complex I subunit 6 family. As to quaternary structure, complex I is composed of at least 49 different subunits.

The protein localises to the mitochondrion membrane. The catalysed reaction is a ubiquinone + NADH + 5 H(+)(in) = a ubiquinol + NAD(+) + 4 H(+)(out). Functionally, core subunit of the mitochondrial membrane respiratory chain NADH dehydrogenase (Complex I) that is believed to belong to the minimal assembly required for catalysis. Complex I functions in the transfer of electrons from NADH to the respiratory chain. The immediate electron acceptor for the enzyme is believed to be ubiquinone. This is NADH-ubiquinone oxidoreductase chain 6 (ND6) from Arabidopsis thaliana (Mouse-ear cress).